The primary structure comprises 321 residues: MHKYQTHWVEHSIVKILSSTGKKHIALMVGGMSAEREVSLVSSEGVSKALIELGYRVTFIDMGADIAVRLQEIKPDIVFNCLHGTYGEDGCLPGLLNIMRIPYTHSGMLSSALAFDKIHSRIWFLTNNINMAESIVVNKSDNIKNDPMKRPYVIKPLTQGSSIGVEVIFAEDDFNFADYDFPYGDQVIIEQYIKGRELQVAVLNGKALGALEIKLLKNRFYDYETKYTEGFADHLCPAPLPANLYEKLLIESEKIYKTMNCKGPARAEFILEEQTNKLYALEINTHPGMTPLSIVPEIAAYAGINFTNLIEEIIKMASFES.

Residues 121-315 (RIWFLTNNIN…FTNLIEEIIK (195 aa)) form the ATP-grasp domain. 147 to 199 (PMKRPYVIKPLTQGSSIGVEVIFAEDDFNFADYDFPYGDQVIIEQYIKGRELQ) is an ATP binding site. Positions 268, 282, and 284 each coordinate Mg(2+).

This sequence belongs to the D-alanine--D-alanine ligase family. Requires Mg(2+) as cofactor. The cofactor is Mn(2+).

Its subcellular location is the cytoplasm. It catalyses the reaction 2 D-alanine + ATP = D-alanyl-D-alanine + ADP + phosphate + H(+). It functions in the pathway cell wall biogenesis; peptidoglycan biosynthesis. Functionally, cell wall formation. The polypeptide is D-alanine--D-alanine ligase (Rickettsia africae (strain ESF-5)).